Here is a 261-residue protein sequence, read N- to C-terminus: Ribonuclease PH (261 aa).

Phosphate is bound by residues Arg-88 and 126–128; that span reads GTR. Residues 242–261 form a disordered region; the sequence is PYPGVLPEPKNPEPKKKFGA. The span at 251-261 shows a compositional bias: basic and acidic residues; that stretch reads KNPEPKKKFGA.

Belongs to the RNase PH family. Homohexameric ring arranged as a trimer of dimers.

The enzyme catalyses tRNA(n+1) + phosphate = tRNA(n) + a ribonucleoside 5'-diphosphate. Phosphorolytic 3'-5' exoribonuclease that plays an important role in tRNA 3'-end maturation. Removes nucleotide residues following the 3'-CCA terminus of tRNAs; can also add nucleotides to the ends of RNA molecules by using nucleoside diphosphates as substrates, but this may not be physiologically important. Probably plays a role in initiation of 16S rRNA degradation (leading to ribosome degradation) during starvation. This chain is Ribonuclease PH, found in Rhodococcus erythropolis (strain PR4 / NBRC 100887).